A 171-amino-acid polypeptide reads, in one-letter code: UPF0316 protein EAT1b_0871 (171 aa).

3 consecutive transmembrane segments (helical) span residues 4-24 (ILLI…RTIM), 32-52 (IAGL…GIVF), and 57-77 (TVGM…GGFV).

Belongs to the UPF0316 family.

The protein localises to the cell membrane. This Exiguobacterium sp. (strain ATCC BAA-1283 / AT1b) protein is UPF0316 protein EAT1b_0871.